We begin with the raw amino-acid sequence, 529 residues long: Snake venom 5'-nucleotidase (529 aa).

Residue Gly-1 is a signal peptide. Zn(2+)-binding residues include Asp-12 and His-14. Cys-27 and Cys-32 are disulfide-bonded. Asp-60, Asn-92, His-195, and His-218 together coordinate Zn(2+). N-linked (GlcNAc...) asparagine glycans are attached at residues Asn-308 and Asn-322. 2 disulfides stabilise this stretch: Cys-328–Cys-333 and Cys-340–Cys-362. An AMP-binding site is contributed by Arg-329. 3 residues coordinate AMP: Asn-365, Arg-370, and Phe-393. Cys-452 and Cys-455 are disulfide-bonded. Residues Phe-476 and Asp-482 each contribute to the AMP site. Residue Ser-525 is the site of GPI-anchor amidated serine attachment. A propeptide spans 526 to 529 (AGSL) (removed in mature form).

The protein belongs to the 5'-nucleotidase family. It depends on Zn(2+) as a cofactor. Post-translationally, venom 5'-nucleotidases (or a part thereof) may be released into the venom via exosome-like vesicles. They may be attached via a GPI anchor to the membrane of these vesicles. Soluble forms of 5'-nucleotidase might be released by cleavage of the ectodomain in the exosome-like vesicles or venom gland cells. Expressed by the venom gland.

It is found in the membrane. The catalysed reaction is a ribonucleoside 5'-phosphate + H2O = a ribonucleoside + phosphate. Functionally, hydrolyzes nucleotides into nucleosides. Snake venom 5'-nucleotidases are widely distributed among venomous snake taxa, but there is a lack of information about their biological activities. They have been shown to inhibit platelet aggregation. This effect may be due to the liberation of inhibitory AMP or adenosine by its action on ADP released upon initiation of aggregation. Venom 5'-nucleotidases are also known to synergistically act in vivo with other toxins like ADPases, phospholipases, and disintegrins to exert a more pronounced anti-coagulant effect. This chain is Snake venom 5'-nucleotidase, found in Naja atra (Chinese cobra).